Reading from the N-terminus, the 484-residue chain is Aspartyl/glutamyl-tRNA(Asn/Gln) amidotransferase subunit B (484 aa).

It belongs to the GatB/GatE family. GatB subfamily. In terms of assembly, heterotrimer of A, B and C subunits.

It carries out the reaction L-glutamyl-tRNA(Gln) + L-glutamine + ATP + H2O = L-glutaminyl-tRNA(Gln) + L-glutamate + ADP + phosphate + H(+). The catalysed reaction is L-aspartyl-tRNA(Asn) + L-glutamine + ATP + H2O = L-asparaginyl-tRNA(Asn) + L-glutamate + ADP + phosphate + 2 H(+). Its function is as follows. Allows the formation of correctly charged Asn-tRNA(Asn) or Gln-tRNA(Gln) through the transamidation of misacylated Asp-tRNA(Asn) or Glu-tRNA(Gln) in organisms which lack either or both of asparaginyl-tRNA or glutaminyl-tRNA synthetases. The reaction takes place in the presence of glutamine and ATP through an activated phospho-Asp-tRNA(Asn) or phospho-Glu-tRNA(Gln). The chain is Aspartyl/glutamyl-tRNA(Asn/Gln) amidotransferase subunit B from Dechloromonas aromatica (strain RCB).